The following is an 852-amino-acid chain: MGAFGWEQDRGAPFSGRSPRILTRMTDAPRPTAGADAPARPPAAPLVAPNFITEIIERDLEAGKYPRVVTRFPPDPSGYAHLGHVFASLLDFNTARQYGGQFNLRMDDTNPELARQEYVDSIADDLKWLGLDWGEHFYYASDYFDRYYAYAEQLIRQGDAYVESVSPEELSRLRGNATTPGTPSPYRDRSVEENLDLLRRMKAGEFADGEHVLRAKIDLTAPNMKLRDPVLYRIVNKPHFRTSDEWHIYPAYDFEHPLQDAIEGVTHSMCSLEFVDNRAIYDWLMEKLNFDPRPHQYEFGRRGLEYTITSKRKLRELVQAGRVSGWDDPRMPTLRAQRRLGVTPEAVRAFAAQIGVSRTNRTVDIAVYENAVRDDLNHRAPRVMAVLDPVKVTLTNLDGEKTLSLPYWPHDVVRDSPDGLVGMPGGGRVAPEEAVRDVPLTRELYIERDDFSPAPPKGFKRLTPGGTVRLRGAGIIRADDFGTDEAGQVTHIRATLLGEDAKAAGVIHWVSAERALPAEFRLYDRLFRVPHPEGENADVEDDSAGPAEHEAEPGAGQETAPVSQGFMRYLTPDSLRVLRGYVEPSVAGDPADTRYQFERQGYFWRDPVELERVDSREDALVFGRIITLKDTWGKQGGGTQQKAEGKKRPSTKGRGPDEVRGEGSSSPAKAHAPKAQPLTPEQDAEFTRLLGLGASEGDARTIARDPALLAFVGGAAPGDTFAQVASWTVNELVAGLRAGEVKVRAADLAPLAEGVASGQLSARIAREALARAAASGDAPLTIIEREGLNAGLSAEALQQVVAQVIAANPDKAEAYRGGKTALLGFFTGQVMRATAGKADPQALAAALKDALA.

The disordered stretch occupies residues 1–42 (MGAFGWEQDRGAPFSGRSPRILTRMTDAPRPTAGADAPARPP). A glutaminyl-tRNA synthetase region spans residues 1–635 (MGAFGWEQDR…ITLKDTWGKQ (635 aa)). A compositionally biased stretch (low complexity) spans 28 to 38 (APRPTAGADAP). The short motif at 74–84 (PDPSGYAHLGH) is the 'HIGH' region element. Residues aspartate 107 and tyrosine 252 each contribute to the L-glutamine site. The 'KMSKS' region signature appears at 308–312 (ITSKR). Disordered stretches follow at residues 533–562 (EGEN…TAPV) and 632–681 (WGKQ…LTPE). Residues 636–852 (GGGTQQKAEG…LAAALKDALA (217 aa)) form a gatB-like region. The segment covering 664–675 (SSSPAKAHAPKA) has biased composition (low complexity).

This sequence in the N-terminal section; belongs to the class-I aminoacyl-tRNA synthetase family. The protein in the C-terminal section; belongs to the GatB/GatE family. In terms of assembly, monomer.

Its subcellular location is the cytoplasm. It carries out the reaction tRNA(Gln) + L-glutamine + ATP = L-glutaminyl-tRNA(Gln) + AMP + diphosphate. The sequence is that of Glutamine--tRNA ligase from Deinococcus radiodurans (strain ATCC 13939 / DSM 20539 / JCM 16871 / CCUG 27074 / LMG 4051 / NBRC 15346 / NCIMB 9279 / VKM B-1422 / R1).